The primary structure comprises 446 residues: ATP-dependent protease ATPase subunit HslU (446 aa).

ATP is bound by residues V17, 59–64, D255, E320, and R392; that span reads GVGKTE.

This sequence belongs to the ClpX chaperone family. HslU subfamily. In terms of assembly, a double ring-shaped homohexamer of HslV is capped on each side by a ring-shaped HslU homohexamer. The assembly of the HslU/HslV complex is dependent on binding of ATP.

The protein resides in the cytoplasm. Its function is as follows. ATPase subunit of a proteasome-like degradation complex; this subunit has chaperone activity. The binding of ATP and its subsequent hydrolysis by HslU are essential for unfolding of protein substrates subsequently hydrolyzed by HslV. HslU recognizes the N-terminal part of its protein substrates and unfolds these before they are guided to HslV for hydrolysis. The polypeptide is ATP-dependent protease ATPase subunit HslU (Azotobacter vinelandii (strain DJ / ATCC BAA-1303)).